The primary structure comprises 268 residues: WUSCHEL-related homeobox 11 (268 aa).

The disordered stretch occupies residues 1–35 (MDQEQTPHSPTRHSRSPPSSASGSTSAEPVRSRWS). The segment covering 16 to 27 (SPPSSASGSTSA) has biased composition (low complexity). Positions 29 to 93 (PVRSRWSPKP…NRRSRSRRRQ (65 aa)) form a DNA-binding region, homeobox; WUS-type.

This sequence belongs to the WUS homeobox family.

It is found in the nucleus. Transcription factor which may be involved in developmental processes. The protein is WUSCHEL-related homeobox 11 (WOX11) of Arabidopsis thaliana (Mouse-ear cress).